The chain runs to 134 residues: MSDIPSDLHYTAEHEWIRRSGDDTVRVGITDYAQSALGDVVFVQLPVIGTAVTAGETFGEVESTKSVSDLYAPISGKVSEVNSDLDGTPQLVNSDPYGAGWLLDIQVDSSDVAALESALTTLLDAEAYRGTLTE.

Positions 24–106 constitute a Lipoyl-binding domain; the sequence is TVRVGITDYA…YGAGWLLDIQ (83 aa). At lysine 65 the chain carries N6-lipoyllysine.

The protein belongs to the GcvH family. In terms of assembly, the glycine cleavage system is composed of four proteins: P, T, L and H. It depends on (R)-lipoate as a cofactor.

Functionally, the glycine cleavage system catalyzes the degradation of glycine. The H protein shuttles the methylamine group of glycine from the P protein to the T protein. This Mycobacterium tuberculosis (strain ATCC 25177 / H37Ra) protein is Glycine cleavage system H protein.